The sequence spans 103 residues: Iron-sulfur cluster assembly protein CyaY (103 aa).

The protein belongs to the frataxin family.

Involved in iron-sulfur (Fe-S) cluster assembly. May act as a regulator of Fe-S biogenesis. The polypeptide is Iron-sulfur cluster assembly protein CyaY (Rickettsia rickettsii (strain Iowa)).